Here is a 639-residue protein sequence, read N- to C-terminus: Chaperone protein HtpG (639 aa).

Residues 1–348 are a; substrate-binding; it reads MAQYEFQTEV…SEDLPLNVSR (348 aa). The tract at residues 349–565 is b; sequence EILQQNRVLA…ENDPTVQMER (217 aa). The interval 566 to 639 is c; the sequence is LMRATGQTHK…KRVNRLLARG (74 aa).

It belongs to the heat shock protein 90 family. In terms of assembly, homodimer.

It is found in the cytoplasm. Its function is as follows. Molecular chaperone. Has ATPase activity. The polypeptide is Chaperone protein HtpG (Treponema pallidum (strain Nichols)).